Reading from the N-terminus, the 202-residue chain is Dephospho-CoA kinase (202 aa).

Positions 6 to 202 (KVSITGDLSS…EYFYALKGAL (197 aa)) constitute a DPCK domain. 14 to 19 (SSGKTE) is a binding site for ATP.

Belongs to the CoaE family.

Its subcellular location is the cytoplasm. The catalysed reaction is 3'-dephospho-CoA + ATP = ADP + CoA + H(+). It participates in cofactor biosynthesis; coenzyme A biosynthesis; CoA from (R)-pantothenate: step 5/5. Catalyzes the phosphorylation of the 3'-hydroxyl group of dephosphocoenzyme A to form coenzyme A. This is Dephospho-CoA kinase from Chlamydia felis (strain Fe/C-56) (Chlamydophila felis).